We begin with the raw amino-acid sequence, 207 residues long: MATTLEVQKRETTQHSEVTRLRSEGKVPGIIYGYKSENVPVSVDSLELIKAVRDNGRNAVFSVTVDGKKLNVLLHEYQVDPLKDVLVHVDLLAVDMNEEVETDVRVVLVGDAPGVKAGGVLQQIIHDVKVSATPEKLPETIELDISSLEIGDVLTTNDLPENKDYVVQAEEEETVVTVSAPRAEEEPTTTEAPEPEAVHGNDEEPVE.

Positions 171 to 207 are disordered; it reads EEETVVTVSAPRAEEEPTTTEAPEPEAVHGNDEEPVE. The segment covering 196-207 has biased composition (basic and acidic residues); it reads EAVHGNDEEPVE.

It belongs to the bacterial ribosomal protein bL25 family. CTC subfamily. As to quaternary structure, part of the 50S ribosomal subunit; part of the 5S rRNA/L5/L18/L25 subcomplex. Contacts the 5S rRNA. Binds to the 5S rRNA independently of L5 and L18.

In terms of biological role, this is one of the proteins that binds to the 5S RNA in the ribosome where it forms part of the central protuberance. The protein is Large ribosomal subunit protein bL25 of Listeria innocua serovar 6a (strain ATCC BAA-680 / CLIP 11262).